Consider the following 366-residue polypeptide: Mitochondrial substrate carrier family protein H (366 aa).

The span at M1 to S25 shows a compositional bias: low complexity. The segment at M1 to N26 is disordered. 3 Solcar repeats span residues K29–Y121, N132–K243, and S259–S360. The next 6 helical transmembrane spans lie at M35–V55, G96–F112, I133–V151, V175–S192, F262–I282, and V340–I357.

It belongs to the mitochondrial carrier (TC 2.A.29) family.

Its subcellular location is the mitochondrion inner membrane. Its function is as follows. Mitochondrial transporter required for glutathione import into mitochondria. The sequence is that of Mitochondrial substrate carrier family protein H from Dictyostelium discoideum (Social amoeba).